The chain runs to 334 residues: Ketol-acid reductoisomerase (NADP(+)) (334 aa).

The 181-residue stretch at 1 to 181 (MTTVYYDQDV…GATRAGVIET (181 aa)) folds into the KARI N-terminal Rossmann domain. NADP(+)-binding positions include 25-28 (YGSQ), R48, S52, and 82-85 (DEIQ). H107 is an active-site residue. An NADP(+)-binding site is contributed by G133. Residues 182 to 327 (TFKEETETDL…RELREMMPFI (146 aa)) enclose the KARI C-terminal knotted domain. Mg(2+)-binding residues include D190, E194, E226, and E230. Residue S251 coordinates substrate.

It belongs to the ketol-acid reductoisomerase family. It depends on Mg(2+) as a cofactor.

The enzyme catalyses (2R)-2,3-dihydroxy-3-methylbutanoate + NADP(+) = (2S)-2-acetolactate + NADPH + H(+). It carries out the reaction (2R,3R)-2,3-dihydroxy-3-methylpentanoate + NADP(+) = (S)-2-ethyl-2-hydroxy-3-oxobutanoate + NADPH + H(+). It functions in the pathway amino-acid biosynthesis; L-isoleucine biosynthesis; L-isoleucine from 2-oxobutanoate: step 2/4. Its pathway is amino-acid biosynthesis; L-valine biosynthesis; L-valine from pyruvate: step 2/4. In terms of biological role, involved in the biosynthesis of branched-chain amino acids (BCAA). Catalyzes an alkyl-migration followed by a ketol-acid reduction of (S)-2-acetolactate (S2AL) to yield (R)-2,3-dihydroxy-isovalerate. In the isomerase reaction, S2AL is rearranged via a Mg-dependent methyl migration to produce 3-hydroxy-3-methyl-2-ketobutyrate (HMKB). In the reductase reaction, this 2-ketoacid undergoes a metal-dependent reduction by NADPH to yield (R)-2,3-dihydroxy-isovalerate. This Staphylococcus aureus (strain Mu3 / ATCC 700698) protein is Ketol-acid reductoisomerase (NADP(+)).